A 107-amino-acid chain; its full sequence is Nucleoid-associated protein PHZ_c0369 (107 aa).

This sequence belongs to the YbaB/EbfC family. As to quaternary structure, homodimer.

Its subcellular location is the cytoplasm. It localises to the nucleoid. Its function is as follows. Binds to DNA and alters its conformation. May be involved in regulation of gene expression, nucleoid organization and DNA protection. This Phenylobacterium zucineum (strain HLK1) protein is Nucleoid-associated protein PHZ_c0369.